The following is an 86-amino-acid chain: YcgL domain-containing protein IL1825 (86 aa).

Residues 1-85 (MLCDVYRSSK…KREELQVNVN (85 aa)) form the YcgL domain.

The polypeptide is YcgL domain-containing protein IL1825 (Idiomarina loihiensis (strain ATCC BAA-735 / DSM 15497 / L2-TR)).